Consider the following 139-residue polypeptide: Actin-depolymerizing factor 6 (139 aa).

The ADF-H domain occupies Ala-5–Leu-139.

It belongs to the actin-binding proteins ADF family.

Its function is as follows. Actin-depolymerizing protein. Severs actin filaments (F-actin) and binds to actin monomers. In Oryza sativa subsp. japonica (Rice), this protein is Actin-depolymerizing factor 6 (ADF6).